A 334-amino-acid polypeptide reads, in one-letter code: Ribosomal RNA small subunit methyltransferase H (334 aa).

S-adenosyl-L-methionine-binding positions include 34–36 (GGY), aspartate 52, alanine 87, aspartate 100, and glutamine 107.

Belongs to the methyltransferase superfamily. RsmH family.

Its subcellular location is the cytoplasm. The catalysed reaction is cytidine(1402) in 16S rRNA + S-adenosyl-L-methionine = N(4)-methylcytidine(1402) in 16S rRNA + S-adenosyl-L-homocysteine + H(+). Functionally, specifically methylates the N4 position of cytidine in position 1402 (C1402) of 16S rRNA. The polypeptide is Ribosomal RNA small subunit methyltransferase H (Maricaulis maris (strain MCS10) (Caulobacter maris)).